Reading from the N-terminus, the 361-residue chain is KDEL-tailed cysteine endopeptidase CEP2 (361 aa).

An N-terminal signal peptide occupies residues 1–20 (MKKLLLIFLFSLVILQTACG). Positions 21 to 127 (FDYDDKEIES…FMYDHENLSK (107 aa)) are cleaved as a propeptide — activation peptide. Residues asparagine 75 and asparagine 124 are each glycosylated (N-linked (GlcNAc...) asparagine). 3 disulfides stabilise this stretch: cysteine 149–cysteine 191, cysteine 183–cysteine 224, and cysteine 282–cysteine 333. Cysteine 152 is a catalytic residue. Active-site residues include histidine 288 and asparagine 308. A Prevents secretion from ER motif is present at residues 358-361 (KDEL).

It belongs to the peptidase C1 family. As to expression, expressed in roots, stems, rosette and cauline leaves, flowers, buds and green siliques. Found in the tip of young primary leaves, in very young root tips and at later stages in all tissues of lateral root, including the vascular bundle. Not expressed in lateral root primordia, while directly emerging through the epidermis.

Its subcellular location is the endoplasmic reticulum. Involved in the final stage of developmental programmed cell death and in intercalation of new cells. Cleaves extensins, thus probably supporting the final cell collapse. This Arabidopsis thaliana (Mouse-ear cress) protein is KDEL-tailed cysteine endopeptidase CEP2.